A 64-amino-acid chain; its full sequence is Translation machinery-associated protein 7 (64 aa).

The disordered stretch occupies residues 1 to 64 (MSGREGGKKK…GGGIKKSGKK (64 aa)). The stretch at 21–50 (EMDEDEMAFKQKQKEDQKAMEQLKAKAAGK) forms a coiled coil. A compositionally biased stretch (basic and acidic residues) spans 27 to 44 (MAFKQKQKEDQKAMEQLK). Residues 52–64 (PLTGGGIKKSGKK) are compositionally biased toward gly residues.

This sequence belongs to the TMA7 family.

The sequence is that of Translation machinery-associated protein 7 (tma7) from Danio rerio (Zebrafish).